The following is a 329-amino-acid chain: Vitamin B12 import system permease protein BtuC (329 aa).

9 helical membrane passes run 18 to 38 (WLLS…CAGE), 64 to 84 (LAVL…QALF), 91 to 111 (PGLL…VLLG), 115 to 135 (LPGW…TLIL), 149 to 169 (LLAG…AIYF), 191 to 208 (WQQS…IWIC), 243 to 263 (GWMV…GLVI), 277 to 297 (VLLP…DVVA), and 305 to 325 (ELPI…WLLL).

The protein belongs to the binding-protein-dependent transport system permease family. FecCD subfamily. The complex is composed of two ATP-binding proteins (BtuD), two transmembrane proteins (BtuC) and a solute-binding protein (BtuF).

It localises to the cell inner membrane. Its function is as follows. Part of the ABC transporter complex BtuCDF involved in vitamin B12 import. Involved in the translocation of the substrate across the membrane. The polypeptide is Vitamin B12 import system permease protein BtuC (Salmonella arizonae (strain ATCC BAA-731 / CDC346-86 / RSK2980)).